Here is a 185-residue protein sequence, read N- to C-terminus: Glycerol-3-phosphate acyltransferase 4 (185 aa).

Transmembrane regions (helical) follow at residues 1–21 (MPLL…AYLA), 47–67 (LGRG…SLAI), 69–89 (LALA…AAVL), 113–133 (LLIA…VLLF), 137–157 (VIAA…LYGL), and 158–178 (PGGV…THFI).

It belongs to the PlsY family. In terms of assembly, probably interacts with PlsX.

Its subcellular location is the cell membrane. It carries out the reaction an acyl phosphate + sn-glycerol 3-phosphate = a 1-acyl-sn-glycero-3-phosphate + phosphate. Its pathway is lipid metabolism; phospholipid metabolism. Its function is as follows. Catalyzes the transfer of an acyl group from acyl-phosphate (acyl-PO(4)) to glycerol-3-phosphate (G3P) to form lysophosphatidic acid (LPA). This enzyme utilizes acyl-phosphate as fatty acyl donor, but not acyl-CoA or acyl-ACP. This chain is Glycerol-3-phosphate acyltransferase 4, found in Dehalococcoides mccartyi (strain ATCC BAA-2266 / KCTC 15142 / 195) (Dehalococcoides ethenogenes (strain 195)).